Reading from the N-terminus, the 250-residue chain is 5'-nucleotidase SurE (250 aa).

A divalent metal cation contacts are provided by Asp-8, Asp-9, Ser-39, and Asn-91.

It belongs to the SurE nucleotidase family. Requires a divalent metal cation as cofactor.

The protein localises to the cytoplasm. The enzyme catalyses a ribonucleoside 5'-phosphate + H2O = a ribonucleoside + phosphate. Its function is as follows. Nucleotidase that shows phosphatase activity on nucleoside 5'-monophosphates. This Leptospira borgpetersenii serovar Hardjo-bovis (strain JB197) protein is 5'-nucleotidase SurE.